A 175-amino-acid chain; its full sequence is Keratin-associated protein 13-2 (175 aa).

Repeat copies occupy residues 46 to 55 (CQLGSSLYRG), 56 to 65 (CQEICWEPTS), 66 to 75 (CQTSYVESSP), 76 to 85 (CQTSCYRPRT), and 92 to 101 (CKTTYSGSLG). Residues 46 to 101 (CQLGSSLYRGCQEICWEPTSCQTSYVESSPCQTSCYRPRTSLLCSPCKTTYSGSLG) are 5 X 10 AA approximate repeats.

The protein belongs to the PMG family. In terms of assembly, interacts with hair keratins.

In terms of biological role, in the hair cortex, hair keratin intermediate filaments are embedded in an interfilamentous matrix, consisting of hair keratin-associated proteins (KRTAP), which are essential for the formation of a rigid and resistant hair shaft through their extensive disulfide bond cross-linking with abundant cysteine residues of hair keratins. The matrix proteins include the high-sulfur and high-glycine-tyrosine keratins. This chain is Keratin-associated protein 13-2 (KRTAP13-2), found in Homo sapiens (Human).